The primary structure comprises 155 residues: 2-C-methyl-D-erythritol 2,4-cyclodiphosphate synthase (155 aa).

2 residues coordinate a divalent metal cation: D9 and H11. Residues 9-11 (DSH) and 35-36 (HS) contribute to the 4-CDP-2-C-methyl-D-erythritol 2-phosphate site. Residue H43 coordinates a divalent metal cation. 57–59 (DIG) is a 4-CDP-2-C-methyl-D-erythritol 2-phosphate binding site.

The protein belongs to the IspF family. In terms of assembly, homotrimer. A divalent metal cation serves as cofactor.

The catalysed reaction is 4-CDP-2-C-methyl-D-erythritol 2-phosphate = 2-C-methyl-D-erythritol 2,4-cyclic diphosphate + CMP. Its pathway is isoprenoid biosynthesis; isopentenyl diphosphate biosynthesis via DXP pathway; isopentenyl diphosphate from 1-deoxy-D-xylulose 5-phosphate: step 4/6. Functionally, involved in the biosynthesis of isopentenyl diphosphate (IPP) and dimethylallyl diphosphate (DMAPP), two major building blocks of isoprenoid compounds. Catalyzes the conversion of 4-diphosphocytidyl-2-C-methyl-D-erythritol 2-phosphate (CDP-ME2P) to 2-C-methyl-D-erythritol 2,4-cyclodiphosphate (ME-CPP) with a corresponding release of cytidine 5-monophosphate (CMP). This Koribacter versatilis (strain Ellin345) protein is 2-C-methyl-D-erythritol 2,4-cyclodiphosphate synthase.